Reading from the N-terminus, the 64-residue chain is DNA gyrase inhibitor YacG (64 aa).

The Zn(2+) site is built by C9, C12, C28, and C32. A disordered region spans residues 45–64 (NAIAGAPDMSDSDGWSEDQY). A compositionally biased stretch (acidic residues) spans 54-64 (SDSDGWSEDQY).

It belongs to the DNA gyrase inhibitor YacG family. As to quaternary structure, interacts with GyrB. It depends on Zn(2+) as a cofactor.

In terms of biological role, inhibits all the catalytic activities of DNA gyrase by preventing its interaction with DNA. Acts by binding directly to the C-terminal domain of GyrB, which probably disrupts DNA binding by the gyrase. The sequence is that of DNA gyrase inhibitor YacG from Vibrio parahaemolyticus serotype O3:K6 (strain RIMD 2210633).